The primary structure comprises 241 residues: Small ribosomal subunit protein eS4 (241 aa).

The 63-residue stretch at 37–99 (IPLGLLLRDY…ADLYLRIVPD (63 aa)) folds into the S4 RNA-binding domain.

This sequence belongs to the eukaryotic ribosomal protein eS4 family.

The sequence is that of Small ribosomal subunit protein eS4 from Metallosphaera sedula (strain ATCC 51363 / DSM 5348 / JCM 9185 / NBRC 15509 / TH2).